A 358-amino-acid polypeptide reads, in one-letter code: Dynein axonemal assembly factor 10 (358 aa).

WD repeat units lie at residues Glu-64 to Tyr-106, Asn-116 to Ala-155, Glu-163 to Glu-206, Asn-208 to Gly-250, Ala-258 to Arg-298, and Leu-320 to Leu-358.

In terms of assembly, interacts with PIH1D1; the interaction associates DNAAF10 with the R2TP complex. Interacts with several dynein axonemal assembly factors.

The protein localises to the dynein axonemal particle. Functionally, key assembly factor specifically required for the stability of axonemal dynein heavy chains in cytoplasm. In Xenopus tropicalis (Western clawed frog), this protein is Dynein axonemal assembly factor 10 (dnaaf10).